We begin with the raw amino-acid sequence, 443 residues long: DNA double-strand break repair protein Mre11 (443 aa).

The Mn(2+) site is built by D8, H10, D49, and N84. H85 acts as the Proton donor in catalysis. Residues H169, H201, and H203 each coordinate Mn(2+). Residues 382–429 (QEEGAEERVVEEETEKKVEEQFKGDEEADEAERRAEETEKAKSTKKAR) form a disordered region. The segment covering 395–423 (TEKKVEEQFKGDEEADEAERRAEETEKAK) has biased composition (basic and acidic residues).

Belongs to the MRE11/RAD32 family. As to quaternary structure, homodimer. Forms a heterotetramer composed of two Mre11 subunits and two Rad50 subunits. Requires Mn(2+) as cofactor.

Nuclease activity is regulated by Rad50. Its function is as follows. Part of the Rad50/Mre11 complex, which is involved in the early steps of DNA double-strand break (DSB) repair. The complex may facilitate opening of the processed DNA ends to aid in the recruitment of HerA and NurA. Mre11 binds to DSB ends and has both double-stranded 3'-5' exonuclease activity and single-stranded endonuclease activity. This chain is DNA double-strand break repair protein Mre11, found in Archaeoglobus fulgidus (strain ATCC 49558 / DSM 4304 / JCM 9628 / NBRC 100126 / VC-16).